The chain runs to 924 residues: Autophagy-related protein 9B (924 aa).

The segment at 1–144 (MVSRMGWGGR…QDSPGLRVGP (144 aa)) is disordered. The Cytoplasmic portion of the chain corresponds to 1–207 (MVSRMGWGGR…KIYSYHQRNG (207 aa)). Residues 17 to 27 (WGDLGPGSVPL) are compositionally biased toward low complexity. Positions 28-40 (LPMPLPPPPPPSC) are enriched in pro residues. A compositionally biased stretch (polar residues) spans 78 to 88 (LQGTGASQSCH). Positions 98 to 113 (PTQAQPAMTPASASPS) are enriched in low complexity. The short motif at 151–154 (YERL) is the Tyrosine-based sorting signal element. Residues 208-228 (FACILLEDVFQLGQFIFIVTF) traverse the membrane as a helical segment. Over 229-276 (TTFLLRCVDYNVLFANQPSNHTRPGPFHSKVTLSDAILPSAQCAERIR) the chain is Lumenal. A helical membrane pass occupies residues 277–297 (SSPLLVLLLVLAAGFWLVQLL). Over 298-438 (RSVCNLFSYW…GALAARWGRT (141 aa)) the chain is Cytoplasmic. An intramembrane segment occupies 439–459 (VLLLAALNLALSPLVLAWQVL). Topologically, residues 460–526 (HVFYSHVELL…AAPPAPLRTL (67 aa)) are cytoplasmic. A helical transmembrane segment spans residues 527–547 (LARQLVFFAGALFAALLVLTV). Residues 548 to 551 (YDED) are Lumenal-facing. Residues 552-572 (VLAVEHVLTAMTALGVTATVA) form a helical membrane-spanning segment. Topologically, residues 573–624 (RSFIPEEQCQGRAPQLLLQTALAHMHYLPEEPGPGGRDRAYRQMAQLLQYRA) are cytoplasmic. Residues 625–645 (VSLLEELLSPLLTPLFLLFWF) lie within the membrane without spanning it. The Cytoplasmic segment spans residues 646-924 (RPRALEIIDF…KEPDRASCTD (279 aa)). The interval 847-924 (QQEPWGEAAA…KEPDRASCTD (78 aa)) is disordered. The segment covering 878-890 (SWSSDGSSPASSP) has biased composition (low complexity). Residues 913 to 924 (TQKEPDRASCTD) are compositionally biased toward basic and acidic residues.

Belongs to the ATG9 family. As to quaternary structure, homotrimer; forms a homotrimer with a central pore that forms a path between the two membrane leaflets. In terms of tissue distribution, highly expressed in placenta (trophoblast cells) and pituitary gland. Not expressed in vascular endothelial.

The protein resides in the preautophagosomal structure membrane. It carries out the reaction a 1,2-diacyl-sn-glycero-3-phosphocholine(in) = a 1,2-diacyl-sn-glycero-3-phosphocholine(out). It catalyses the reaction a 1,2-diacyl-sn-glycero-3-phospho-L-serine(in) = a 1,2-diacyl-sn-glycero-3-phospho-L-serine(out). The catalysed reaction is a 1,2-diacyl-sn-glycero-3-phosphoethanolamine(in) = a 1,2-diacyl-sn-glycero-3-phosphoethanolamine(out). Its function is as follows. Phospholipid scramblase involved in autophagy by mediating autophagosomal membrane expansion. Cycles between the preautophagosomal structure/phagophore assembly site (PAS) and the cytoplasmic vesicle pool and supplies membrane for the growing autophagosome. Lipid scramblase activity plays a key role in preautophagosomal structure/phagophore assembly by distributing the phospholipids that arrive through ATG2 (ATG2A or ATG2B) from the cytoplasmic to the luminal leaflet of the bilayer, thereby driving autophagosomal membrane expansion. In addition to autophagy, also plays a role in necrotic cell death. This Homo sapiens (Human) protein is Autophagy-related protein 9B (ATG9B).